Reading from the N-terminus, the 623-residue chain is E3 ubiquitin-protein ligase ORTHRUS 5 (623 aa).

A PHD-type zinc finger spans residues Asp12 to Val62. The RING-type 1 zinc-finger motif lies at Cys129–Arg169. One can recognise a YDG domain in the interval Thr258–Arg407. The RING-type 2 zinc-finger motif lies at Cys498–Thr555. Positions Lys580–Ala623 are disordered. Acidic residues predominate over residues Ser594–Glu603. Over residues Pro604–Lys613 the composition is skewed to basic and acidic residues.

Expressed in inflorescences.

The protein localises to the nucleus. It carries out the reaction S-ubiquitinyl-[E2 ubiquitin-conjugating enzyme]-L-cysteine + [acceptor protein]-L-lysine = [E2 ubiquitin-conjugating enzyme]-L-cysteine + N(6)-ubiquitinyl-[acceptor protein]-L-lysine.. The protein operates within protein modification; protein ubiquitination. Functionally, E3 ubiquitin-protein ligase. Participates in CpG methylation-dependent transcriptional regulation and epigenetic transcriptional silencing. Mediates ubiquitination with the E2 ubiquitin-conjugating enzyme UBC11. The protein is E3 ubiquitin-protein ligase ORTHRUS 5 (ORTH5) of Arabidopsis thaliana (Mouse-ear cress).